A 351-amino-acid polypeptide reads, in one-letter code: Phosphate acyltransferase (351 aa).

Belongs to the PlsX family. Homodimer. Probably interacts with PlsY.

It is found in the cytoplasm. The catalysed reaction is a fatty acyl-[ACP] + phosphate = an acyl phosphate + holo-[ACP]. It participates in lipid metabolism; phospholipid metabolism. Catalyzes the reversible formation of acyl-phosphate (acyl-PO(4)) from acyl-[acyl-carrier-protein] (acyl-ACP). This enzyme utilizes acyl-ACP as fatty acyl donor, but not acyl-CoA. The protein is Phosphate acyltransferase of Maricaulis maris (strain MCS10) (Caulobacter maris).